The sequence spans 459 residues: Phosphoglucosamine mutase (459 aa).

S105 acts as the Phosphoserine intermediate in catalysis. Mg(2+) is bound by residues S105, D252, D254, and D256. S105 is subject to Phosphoserine.

It belongs to the phosphohexose mutase family. It depends on Mg(2+) as a cofactor. Activated by phosphorylation.

It catalyses the reaction alpha-D-glucosamine 1-phosphate = D-glucosamine 6-phosphate. Functionally, catalyzes the conversion of glucosamine-6-phosphate to glucosamine-1-phosphate. The protein is Phosphoglucosamine mutase of Bifidobacterium adolescentis (strain ATCC 15703 / DSM 20083 / NCTC 11814 / E194a).